The following is a 671-amino-acid chain: Condensin complex subunit 2 (671 aa).

The segment covering 1-24 (MDESLTPNPKQKPASTTTRIQAPT) has biased composition (polar residues). Disordered regions lie at residues 1 to 33 (MDES…GSND), 404 to 444 (NSWA…KQAE), and 510 to 564 (RRKN…ISQP). The short motif at 406-415 (WAGPDHWKYR) is the Kleisin-gamma middle domain (GM domain) involved in chromosome-binding element. Over residues 536-556 (VYDDDDGPFDDNENDQSDAED) the composition is skewed to acidic residues.

Belongs to the CND2 (condensin subunit 2) family. In terms of assembly, component of the condensin complex. Mostly expressed in flower buds and flowers, and, to a lower extent, in roots, stems, leaves and seedlings.

It is found in the cytoplasm. Its subcellular location is the chromosome. Its function is as follows. Regulatory subunit of the condensin complex, a complex required for conversion of interphase chromatin into mitotic-like condense chromosomes. The condensin complex probably introduces positive supercoils into relaxed DNA in the presence of type I topoisomerases and converts nicked DNA into positive knotted forms in the presence of type II topoisomerases. Essential protein. The sequence is that of Condensin complex subunit 2 (CAPH) from Arabidopsis thaliana (Mouse-ear cress).